The following is a 489-amino-acid chain: Glycogen synthase (489 aa).

Arg-20 contacts ADP-alpha-D-glucose.

Belongs to the glycosyltransferase 1 family. Bacterial/plant glycogen synthase subfamily.

It catalyses the reaction [(1-&gt;4)-alpha-D-glucosyl](n) + ADP-alpha-D-glucose = [(1-&gt;4)-alpha-D-glucosyl](n+1) + ADP + H(+). The protein operates within glycan biosynthesis; glycogen biosynthesis. In terms of biological role, synthesizes alpha-1,4-glucan chains using ADP-glucose. This Chlorobium chlorochromatii (strain CaD3) protein is Glycogen synthase.